The primary structure comprises 442 residues: SPRY domain-containing protein 3 (442 aa).

One can recognise a B30.2/SPRY domain in the interval 17–204 (DLNLHYRFLN…VRLHLNAELG (188 aa)). The segment at 371–394 (EGEEEEEEEEEEEDGEEIEPEHEG) is disordered. The span at 372–390 (GEEEEEEEEEEEDGEEIEP) shows a compositional bias: acidic residues.

This is SPRY domain-containing protein 3 (SPRYD3) from Homo sapiens (Human).